We begin with the raw amino-acid sequence, 509 residues long: FAD-linked oxidoreductase anuG (509 aa).

The first 21 residues, 1–21, serve as a signal peptide directing secretion; the sequence is MVQISNVWGFGLAIMASLAAA. The FAD-binding PCMH-type domain maps to 75–246; it reads YAAPKFTVVV…TSFEMSIYPT (172 aa).

Belongs to the oxygen-dependent FAD-linked oxidoreductase family. Requires FAD as cofactor.

It catalyses the reaction (2S,9S)-annullatin H + 2 A = (2S,9S)-annullatin D + 2 AH2. Its pathway is secondary metabolite biosynthesis. Functionally, cytochrome P450 monooxygenase; part of the gene cluster that mediates the biosynthesis of annullatin D, an alkylated aromatic polyketide with a fused dihydrobenzofuran lactone ring system that exhibits potent agonistic activities toward the cannabinoid receptors. Within the pathway, anuG is responsible for the five-member lactone ring formation in (2S, 9S)-annullatin D via oxidative lactonization between the two hydroxyl groups. The annullatin backbone 2-hydroxymethyl-3-pentylphenol is assembled from one acetyl-CoA starter unit and 5 malonyl-CoA elongation units by cooperation of the highly reducing polyketide synthase anuA, the short-chain dehydrogenase anuB and the oxidoreductase anuC, before being hydroxylated at the C-5 alkyl chain by the cytochrome P450 monooxygenase anuE to form (8S)-annullatin E. The prenyltransferase anuH subsequently installs one isoprenyl group at the benzene ring to form (8S)-annullatin J. Enzymatic or nonenzymatic dihydro-benzofuran ring formation between the prenyl and the phenolic hydroxyl groups in (8S)-annullatin J results in two diastereomers (2S,9S)-annullatin H and compound 12. The intermediate (2S,9S)-annullatin H is then converted to (2S,9S)-annullatin D by the FAD-linked oxidoreductase anuG-catalyzed five-member lactone ring formation. The isomer 12 acts as a substrate for the short-chain dehydrogenase anuF and is oxidized to (2R)-annullatin F, which is subsequently acetylated by an acetyltransferase leading to (2R)-annullatin G formation. The remaining enzymes identified within the cluster, anuD, anuI and anuJ, seem not to be involved in annullatin biosynthesis. This is FAD-linked oxidoreductase anuG from Penicillium roqueforti (strain FM164).